The chain runs to 213 residues: Adenylate kinase (213 aa).

An ATP-binding site is contributed by 10-15; sequence GAGKGT. Positions 30–59 are NMP; it reads STGDMLRAAVAAGSEVGLRAKAAMESGSLV. Residues Thr31, Arg36, 57–59, 85–88, and Gln92 contribute to the AMP site; these read SLV and GFPR. Positions 126 to 163 are LID; it reads GRSSCEKCGEGYHDSFKPSAQPNVCDKCSGTLKRRADD. Arg127 is an ATP binding site. The Zn(2+) site is built by Cys130, Cys133, Cys150, and Cys153. Residues Arg160 and Arg171 each contribute to the AMP site. Gln199 lines the ATP pocket.

The protein belongs to the adenylate kinase family. In terms of assembly, monomer.

It localises to the cytoplasm. The catalysed reaction is AMP + ATP = 2 ADP. The protein operates within purine metabolism; AMP biosynthesis via salvage pathway; AMP from ADP: step 1/1. Its function is as follows. Catalyzes the reversible transfer of the terminal phosphate group between ATP and AMP. Plays an important role in cellular energy homeostasis and in adenine nucleotide metabolism. This chain is Adenylate kinase, found in Magnetococcus marinus (strain ATCC BAA-1437 / JCM 17883 / MC-1).